We begin with the raw amino-acid sequence, 664 residues long: Intraflagellar transport protein 70A2 (664 aa).

7 TPR repeats span residues 11–44 (DGEF…SSRS), 45–78 (RAGL…HPEL), 153–186 (PDGL…SGYQ), 188–220 (DVSY…GIRQ), 395–423 (QVQE…EKYI), 424–456 (PVLM…CNDH), and 458–491 (VWKL…NYDN). The stretch at 507-534 (YIMTSQNEEAEELMRKIEKEEEQLSYGD) forms a coiled coil. One copy of the TPR 8 repeat lies at 543 to 576 (CIVNLVIGTLYCAKGNYDFGISRVIKSLEPYHKK).

The protein belongs to the TTC30/dfy-1/fleer family. As to quaternary structure, interacts wit the IFT B complex component IFT52.

It is found in the cell projection. It localises to the cilium. Its function is as follows. Required for polyglutamylation of axonemal tubulin. Plays a role in anterograde intraflagellar transport (IFT), the process by which cilia precursors are transported from the base of the cilium to the site of their incorporation at the tip. This chain is Intraflagellar transport protein 70A2 (Ift70a2), found in Mus musculus (Mouse).